A 172-amino-acid chain; its full sequence is Ribosome maturation factor RimM (172 aa).

A PRC barrel domain is found at 97–170 (ENEFYFHEII…KITIEVMEGL (74 aa)).

This sequence belongs to the RimM family. In terms of assembly, binds ribosomal protein uS19.

It is found in the cytoplasm. An accessory protein needed during the final step in the assembly of 30S ribosomal subunit, possibly for assembly of the head region. Essential for efficient processing of 16S rRNA. May be needed both before and after RbfA during the maturation of 16S rRNA. It has affinity for free ribosomal 30S subunits but not for 70S ribosomes. The protein is Ribosome maturation factor RimM of Listeria monocytogenes serovar 1/2a (strain ATCC BAA-679 / EGD-e).